The sequence spans 113 residues: Endoribonuclease SymE (113 aa).

Residues 29 to 74 (SRYPDYSRIPAITLKGQWLEAAGFATGTAVDVKVMEGCIVLTAQPP) form the SpoVT-AbrB domain.

It belongs to the SymE family.

Its subcellular location is the cytoplasm. Functionally, involved in the degradation and recycling of damaged RNA. It is itself a target for degradation by the ATP-dependent protease Lon. The polypeptide is Endoribonuclease SymE (Escherichia coli (strain K12 / MC4100 / BW2952)).